A 467-amino-acid polypeptide reads, in one-letter code: ATP-dependent protease ATPase subunit HslU (467 aa).

ATP-binding positions include Val-22 and 64–69; that span reads GVGKTE. The tract at residues 149–192 is disordered; that stretch reads QTNNPLESLFGGAIPNFGQNNEDEEEPPTEEIKTKRSEIKRQLE. The span at 178–192 shows a compositional bias: basic and acidic residues; the sequence is EEIKTKRSEIKRQLE. 3 residues coordinate ATP: Asp-280, Glu-345, and Arg-417.

It belongs to the ClpX chaperone family. HslU subfamily. A double ring-shaped homohexamer of HslV is capped on each side by a ring-shaped HslU homohexamer. The assembly of the HslU/HslV complex is dependent on binding of ATP.

It localises to the cytoplasm. In terms of biological role, ATPase subunit of a proteasome-like degradation complex; this subunit has chaperone activity. The binding of ATP and its subsequent hydrolysis by HslU are essential for unfolding of protein substrates subsequently hydrolyzed by HslV. HslU recognizes the N-terminal part of its protein substrates and unfolds these before they are guided to HslV for hydrolysis. The sequence is that of ATP-dependent protease ATPase subunit HslU from Staphylococcus aureus (strain bovine RF122 / ET3-1).